A 176-amino-acid chain; its full sequence is Ribose 1,5-bisphosphate phosphokinase PhnN (176 aa).

10–17 (GPSGAGKD) contacts ATP.

Belongs to the ribose 1,5-bisphosphokinase family.

It carries out the reaction alpha-D-ribose 1,5-bisphosphate + ATP = 5-phospho-alpha-D-ribose 1-diphosphate + ADP. It functions in the pathway metabolic intermediate biosynthesis; 5-phospho-alpha-D-ribose 1-diphosphate biosynthesis; 5-phospho-alpha-D-ribose 1-diphosphate from D-ribose 5-phosphate (route II): step 3/3. Catalyzes the phosphorylation of ribose 1,5-bisphosphate to 5-phospho-D-ribosyl alpha-1-diphosphate (PRPP). This is Ribose 1,5-bisphosphate phosphokinase PhnN from Methylobacterium radiotolerans (strain ATCC 27329 / DSM 1819 / JCM 2831 / NBRC 15690 / NCIMB 10815 / 0-1).